We begin with the raw amino-acid sequence, 198 residues long: MSTSSVPSLTYFQGRGLGQFSRVLLSYLGIPYENITVTEISDALRATLPYGQLPIYRDGDFVLTQSSTIARYIAKKHNFMGKNLEEEFLVDQIVTAIHADIFPAFNNPVPEKLQKLYEKYFGSFEKKLQETGFLVGSSVTLADLYVYVGFDYIRFRGEAALSSELSDEKYPKIAELKKFFESNEGVAKYIKERPETKF.

Residue Ser2 is modified to N-acetylserine. The region spanning 5-81 is the GST N-terminal domain; the sequence is SVPSLTYFQG…YIAKKHNFMG (77 aa). Glutathione is bound by residues Tyr11, Arg45, 52–53, and 65–66; these read QL and QS. In terms of domain architecture, GST C-terminal spans 83 to 198; it reads NLEEEFLVDQ…YIKERPETKF (116 aa).

This sequence belongs to the GST superfamily. Alpha family.

It catalyses the reaction RX + glutathione = an S-substituted glutathione + a halide anion + H(+). In terms of biological role, conjugation of reduced glutathione to a wide number of exogenous and endogenous hydrophobic electrophiles. The chain is Putative glutathione S-transferase alpha-2 (gsta2-1) from Dictyostelium discoideum (Social amoeba).